Reading from the N-terminus, the 68-residue chain is Phage-like element PBSX protein XtrA (68 aa).

To B.subtilis YqaO.

This is Phage-like element PBSX protein XtrA (xtrA) from Bacillus subtilis (strain 168).